The sequence spans 625 residues: Histone-lysine N-methyltransferase set9 (625 aa).

The SET domain occupies 120-234; sequence SPFEVTTTNR…IGEEITVSYG (115 aa). 5 disordered regions span residues 260–348, 368–405, 432–451, 457–476, and 582–625; these read PHVD…ETSI, GSAV…TSIG, ITGQ…DMLS, TDNP…HGVV, and VSFG…RMTM. Composition is skewed to polar residues over residues 269 to 286 and 372 to 386; these read SKAS…NDSL and EVSQ…SSPS. Over residues 462–473 the composition is skewed to basic residues; the sequence is KPKRSRGSRWKH. Residues 593 to 610 are compositionally biased toward basic and acidic residues; it reads SEPRTETEDSEACDDRRN. A compositionally biased stretch (basic residues) spans 611 to 625; it reads TRASRTRTRSLRMTM.

This sequence belongs to the class V-like SAM-binding methyltransferase superfamily. Histone-lysine methyltransferase family. Suvar4-20 subfamily.

The protein resides in the nucleus. It is found in the chromosome. The enzyme catalyses L-lysyl(20)-[histone H4] + 3 S-adenosyl-L-methionine = N(6),N(6),N(6)-trimethyl-L-lysyl(20)-[histone H4] + 3 S-adenosyl-L-homocysteine + 3 H(+). In terms of biological role, histone methyltransferase that trimethylates 'Lys-20' of histone H4 to form H4K20me3. The polypeptide is Histone-lysine N-methyltransferase set9 (set9) (Aspergillus oryzae (strain ATCC 42149 / RIB 40) (Yellow koji mold)).